The primary structure comprises 282 residues: Adenosylcobinamide-GDP ribazoletransferase (282 aa).

A run of 6 helical transmembrane segments spans residues 47-67 (GVGI…QALL), 72-92 (FTPL…TGGF), 124-144 (AFGA…LAML), 167-187 (AALL…IWLL), 208-228 (GSLL…GLAL), and 231-251 (ISLI…GALF).

Belongs to the CobS family. The cofactor is Mg(2+).

The protein resides in the cell inner membrane. It carries out the reaction alpha-ribazole + adenosylcob(III)inamide-GDP = adenosylcob(III)alamin + GMP + H(+). It catalyses the reaction alpha-ribazole 5'-phosphate + adenosylcob(III)inamide-GDP = adenosylcob(III)alamin 5'-phosphate + GMP + H(+). It functions in the pathway cofactor biosynthesis; adenosylcobalamin biosynthesis; adenosylcobalamin from cob(II)yrinate a,c-diamide: step 7/7. Joins adenosylcobinamide-GDP and alpha-ribazole to generate adenosylcobalamin (Ado-cobalamin). Also synthesizes adenosylcobalamin 5'-phosphate from adenosylcobinamide-GDP and alpha-ribazole 5'-phosphate. The polypeptide is Adenosylcobinamide-GDP ribazoletransferase (Polaromonas sp. (strain JS666 / ATCC BAA-500)).